Consider the following 188-residue polypeptide: Elongation factor P (188 aa).

N6-(3,6-diaminohexanoyl)-5-hydroxylysine is present on Lys34.

Belongs to the elongation factor P family. May be beta-lysylated on the epsilon-amino group of Lys-34 by the combined action of EpmA and EpmB, and then hydroxylated on the C5 position of the same residue by EpmC (if this protein is present). Lysylation is critical for the stimulatory effect of EF-P on peptide-bond formation. The lysylation moiety may extend toward the peptidyltransferase center and stabilize the terminal 3-CCA end of the tRNA. Hydroxylation of the C5 position on Lys-34 may allow additional potential stabilizing hydrogen-bond interactions with the P-tRNA.

The protein localises to the cytoplasm. Its pathway is protein biosynthesis; polypeptide chain elongation. In terms of biological role, involved in peptide bond synthesis. Alleviates ribosome stalling that occurs when 3 or more consecutive Pro residues or the sequence PPG is present in a protein, possibly by augmenting the peptidyl transferase activity of the ribosome. Modification of Lys-34 is required for alleviation. In Sodalis glossinidius (strain morsitans), this protein is Elongation factor P.